Here is a 63-residue protein sequence, read N- to C-terminus: Putative ankyrin repeat protein RF_p14 (63 aa).

ANK repeat units follow at residues 11–43 and 44–63; these read KLNQKLMRAAATGDIEAVQKLVLRGADIYCRDH and QGDTALSLAAGSGYLDILDI.

The polypeptide is Putative ankyrin repeat protein RF_p14 (Rickettsia felis (strain ATCC VR-1525 / URRWXCal2) (Rickettsia azadi)).